The primary structure comprises 436 residues: Chromosomal replication initiator protein DnaA (436 aa).

The interval 1 to 69 is domain I, interacts with DnaA modulators; sequence MLADEVIELL…ANIFEVKTGI (69 aa). Residues 69 to 99 form a domain II region; sequence IKPVISITTQKNRVSIKAKDIDVKQIRTQSS. Residues 100–314 form a domain III, AAA+ region region; the sequence is LLNPSYTFES…SAIININAFA (215 aa). ATP is bound by residues G144, G146, K147, and T148. A domain IV, binds dsDNA region spans residues 315–436; that stretch reads NIMRQEITLE…ELKNKITSKE (122 aa).

Belongs to the DnaA family. As to quaternary structure, oligomerizes as a right-handed, spiral filament on DNA at oriC.

The protein localises to the cytoplasm. Functionally, plays an essential role in the initiation and regulation of chromosomal replication. ATP-DnaA binds to the origin of replication (oriC) to initiate formation of the DNA replication initiation complex once per cell cycle. Binds the DnaA box (a 9 base pair repeat at the origin) and separates the double-stranded (ds)DNA. Forms a right-handed helical filament on oriC DNA; dsDNA binds to the exterior of the filament while single-stranded (ss)DNA is stabiized in the filament's interior. The ATP-DnaA-oriC complex binds and stabilizes one strand of the AT-rich DNA unwinding element (DUE), permitting loading of DNA polymerase. After initiation quickly degrades to an ADP-DnaA complex that is not apt for DNA replication. Binds acidic phospholipids. The sequence is that of Chromosomal replication initiator protein DnaA from Campylobacter fetus subsp. fetus (strain 82-40).